A 193-amino-acid polypeptide reads, in one-letter code: Flagellin B1 (193 aa).

Positions 1–12 are excised as a propeptide; that stretch reads MFEFITDEDERG.

Belongs to the archaeal flagellin family. Glycosylated.

It is found in the archaeal flagellum. Flagellin is the subunit protein which polymerizes to form the filaments of archaeal flagella. The protein is Flagellin B1 (flaB1) of Halobacterium salinarum (strain ATCC 700922 / JCM 11081 / NRC-1) (Halobacterium halobium).